The sequence spans 420 residues: Phosphoribosylamine--glycine ligase (420 aa).

One can recognise an ATP-grasp domain in the interval 108–314 (KQIMVKYGIP…FAQNIDDILH (207 aa)). Residue 134-195 (IEEQGAPIVV…EEFLAGEEFS (62 aa)) participates in ATP binding. Residues Glu284 and Asn286 each contribute to the Mg(2+) site.

The protein belongs to the GARS family. The cofactor is Mg(2+). Requires Mn(2+) as cofactor.

It carries out the reaction 5-phospho-beta-D-ribosylamine + glycine + ATP = N(1)-(5-phospho-beta-D-ribosyl)glycinamide + ADP + phosphate + H(+). It participates in purine metabolism; IMP biosynthesis via de novo pathway; N(1)-(5-phospho-D-ribosyl)glycinamide from 5-phospho-alpha-D-ribose 1-diphosphate: step 2/2. In Streptococcus suis, this protein is Phosphoribosylamine--glycine ligase.